The primary structure comprises 246 residues: Small ribosomal subunit protein uS2 (246 aa).

A disordered region spans residues 225–246 (SKSSASVPNKDEYVAAEDGAAE).

This sequence belongs to the universal ribosomal protein uS2 family.

The polypeptide is Small ribosomal subunit protein uS2 (Cellvibrio japonicus (strain Ueda107) (Pseudomonas fluorescens subsp. cellulosa)).